The following is a 784-amino-acid chain: Probable aminopeptidase 1 (784 aa).

Residues Glu-103 and 236–240 (GAMEN) each bind substrate. A Zn(2+)-binding site is contributed by His-271. Catalysis depends on Glu-272, which acts as the Proton acceptor. The Zn(2+) site is built by His-275 and Glu-294.

The protein belongs to the peptidase M1 family. It depends on Zn(2+) as a cofactor.

Its subcellular location is the cytoplasm. The chain is Probable aminopeptidase 1 (ape1) from Saccharolobus solfataricus (strain ATCC 35092 / DSM 1617 / JCM 11322 / P2) (Sulfolobus solfataricus).